A 75-amino-acid chain; its full sequence is Small ribosomal subunit protein eS17 (75 aa).

Belongs to the eukaryotic ribosomal protein eS17 family.

In Thermoplasma acidophilum (strain ATCC 25905 / DSM 1728 / JCM 9062 / NBRC 15155 / AMRC-C165), this protein is Small ribosomal subunit protein eS17.